A 506-amino-acid polypeptide reads, in one-letter code: UDP-N-acetylmuramoylalanine--D-glutamate ligase (506 aa).

128 to 134 (GTNGKTT) is a binding site for ATP.

This sequence belongs to the MurCDEF family.

It is found in the cytoplasm. It carries out the reaction UDP-N-acetyl-alpha-D-muramoyl-L-alanine + D-glutamate + ATP = UDP-N-acetyl-alpha-D-muramoyl-L-alanyl-D-glutamate + ADP + phosphate + H(+). It functions in the pathway cell wall biogenesis; peptidoglycan biosynthesis. In terms of biological role, cell wall formation. Catalyzes the addition of glutamate to the nucleotide precursor UDP-N-acetylmuramoyl-L-alanine (UMA). This Albidiferax ferrireducens (strain ATCC BAA-621 / DSM 15236 / T118) (Rhodoferax ferrireducens) protein is UDP-N-acetylmuramoylalanine--D-glutamate ligase.